The primary structure comprises 268 residues: MLGITVLAAILACASSCGDPTFPPNLSARVVGGEDAVPNSWPWQVSLQYLRDDTWRHTCGGSLITTSHVLTAAHCINTNLTYRVGLGKYNLTVEDEEGSVYAEVDTIYVHEKWNRLLLWNDIAIIKLAEPVELSDTIQVACIPEQDSLLPGDYPCYVTGWGRLWTNGPIAEVLQQGLQPIVNHTTCSRLDWWFIKVRETMVCAGGDGVISACNGDSGGPLNCPVEDGLWQVHGIVSFGSSRGCNTYKKPVVFTRVSAYIDWIKEKIQL.

Residues 1–16 (MLGITVLAAILACASS) form the signal peptide. Residues 17-29 (CGDPTFPPNLSAR) constitute a propeptide, activation peptide. Disulfide bonds link Cys17–Cys141, Cys59–Cys75, Cys155–Cys222, Cys186–Cys202, and Cys212–Cys243. An N-linked (GlcNAc...) asparagine glycan is attached at Asn25. The Peptidase S1 domain occupies 30-267 (VVGGEDAVPN…YIDWIKEKIQ (238 aa)). Residue His74 is the Charge relay system of the active site. Residues Asn79 and Asn90 are each glycosylated (N-linked (GlcNAc...) asparagine). Asp121 serves as the catalytic Charge relay system. An N-linked (GlcNAc...) asparagine glycan is attached at Asn182. Residue Ser216 is the Charge relay system of the active site.

It belongs to the peptidase S1 family. Elastase subfamily.

The enzyme catalyses Preferential cleavage: Leu-|-Xaa, Tyr-|-Xaa, Phe-|-Xaa, Met-|-Xaa, Trp-|-Xaa, Gln-|-Xaa, Asn-|-Xaa.. In terms of biological role, regulates activation and degradation of trypsinogens and procarboxypeptidases by targeting specific cleavage sites within their zymogen precursors. Has chymotrypsin-type protease activity and hypocalcemic activity. Cleaves TRY4 and TRY5 and thereby inhibits their autoactivation. In Mus musculus (Mouse), this protein is Chymotrypsin-C (Ctrc).